The following is a 160-amino-acid chain: Ribosomal RNA large subunit methyltransferase H (160 aa).

2 residues coordinate S-adenosyl-L-methionine: Leu77 and Gly109.

The protein belongs to the RNA methyltransferase RlmH family. Homodimer.

Its subcellular location is the cytoplasm. The enzyme catalyses pseudouridine(1915) in 23S rRNA + S-adenosyl-L-methionine = N(3)-methylpseudouridine(1915) in 23S rRNA + S-adenosyl-L-homocysteine + H(+). Functionally, specifically methylates the pseudouridine at position 1915 (m3Psi1915) in 23S rRNA. The sequence is that of Ribosomal RNA large subunit methyltransferase H from Moorella thermoacetica (strain ATCC 39073 / JCM 9320).